The chain runs to 332 residues: Biotin synthase (332 aa).

A Radical SAM core domain is found at 53 to 282 (HFGKKVKLNM…TKEIRISGGR (230 aa)). Positions 71, 75, and 78 each coordinate [4Fe-4S] cluster. Positions 115, 147, 207, and 277 each coordinate [2Fe-2S] cluster.

Belongs to the radical SAM superfamily. Biotin synthase family. In terms of assembly, homodimer. [4Fe-4S] cluster serves as cofactor. It depends on [2Fe-2S] cluster as a cofactor.

The catalysed reaction is (4R,5S)-dethiobiotin + (sulfur carrier)-SH + 2 reduced [2Fe-2S]-[ferredoxin] + 2 S-adenosyl-L-methionine = (sulfur carrier)-H + biotin + 2 5'-deoxyadenosine + 2 L-methionine + 2 oxidized [2Fe-2S]-[ferredoxin]. Its pathway is cofactor biosynthesis; biotin biosynthesis; biotin from 7,8-diaminononanoate: step 2/2. In terms of biological role, catalyzes the conversion of dethiobiotin (DTB) to biotin by the insertion of a sulfur atom into dethiobiotin via a radical-based mechanism. In Bacillus cereus (strain B4264), this protein is Biotin synthase.